An 89-amino-acid polypeptide reads, in one-letter code: Small ribosomal subunit protein uS15 (89 aa).

This sequence belongs to the universal ribosomal protein uS15 family. In terms of assembly, part of the 30S ribosomal subunit. Forms a bridge to the 50S subunit in the 70S ribosome, contacting the 23S rRNA.

Its function is as follows. One of the primary rRNA binding proteins, it binds directly to 16S rRNA where it helps nucleate assembly of the platform of the 30S subunit by binding and bridging several RNA helices of the 16S rRNA. Functionally, forms an intersubunit bridge (bridge B4) with the 23S rRNA of the 50S subunit in the ribosome. The sequence is that of Small ribosomal subunit protein uS15 from Clavibacter michiganensis subsp. michiganensis (strain NCPPB 382).